The chain runs to 229 residues: Large ribosomal subunit protein uL1 (229 aa).

It belongs to the universal ribosomal protein uL1 family. In terms of assembly, part of the 50S ribosomal subunit.

Its function is as follows. Binds directly to 23S rRNA. The L1 stalk is quite mobile in the ribosome, and is involved in E site tRNA release. Protein L1 is also a translational repressor protein, it controls the translation of the L11 operon by binding to its mRNA. This is Large ribosomal subunit protein uL1 from Rhodopseudomonas palustris (strain TIE-1).